A 290-amino-acid chain; its full sequence is ATP synthase gamma chain (290 aa).

It belongs to the ATPase gamma chain family. As to quaternary structure, F-type ATPases have 2 components, CF(1) - the catalytic core - and CF(0) - the membrane proton channel. CF(1) has five subunits: alpha(3), beta(3), gamma(1), delta(1), epsilon(1). CF(0) has three main subunits: a, b and c.

It is found in the cell inner membrane. Produces ATP from ADP in the presence of a proton gradient across the membrane. The gamma chain is believed to be important in regulating ATPase activity and the flow of protons through the CF(0) complex. This is ATP synthase gamma chain from Desulfotalea psychrophila (strain LSv54 / DSM 12343).